The sequence spans 1138 residues: Nuclear pore complex-interacting protein family member B13 (1138 aa).

The chain crosses the membrane as a helical span at residues 73–93; the sequence is VVITLWIVYLWVSLLKTIFWS. 2 disordered regions span residues 242–578 and 747–1138; these read RMGH…NIKT and ERLR…RRLS. Residues 252-263 show a composition bias toward polar residues; it reads QQHSITDNSLSL. The span at 349-359 shows a compositional bias: pro residues; sequence PLPPSAPPSAP. 10 stretches are compositionally biased toward basic and acidic residues: residues 406 to 416, 448 to 458, 490 to 500, 532 to 542, 782 to 792, 824 to 834, 866 to 876, 908 to 918, 950 to 960, and 992 to 1002; these read DNIKTPAERLR.

It belongs to the NPIP family.

It localises to the membrane. The polypeptide is Nuclear pore complex-interacting protein family member B13 (Homo sapiens (Human)).